A 553-amino-acid chain; its full sequence is Putative transport protein YidE (553 aa).

5 consecutive transmembrane segments (helical) span residues 4 to 24 (IALT…IGNV), 28 to 48 (GVGL…HFVS), 65 to 85 (FGLI…FFAS), 95 to 115 (LFAV…HKLF), and 158 to 178 (MSYA…MWML). 2 RCK C-terminal domains span residues 191–276 (QQHE…VIGQ) and 279–361 (DTSL…VLGN). 6 helical membrane-spanning segments follow: residues 371–391 (MLPV…PVFV), 393–413 (GFPA…ALIL), 439–459 (IVLF…HTLV), 464–484 (LSWI…VGIL), 493–513 (YLTM…LAFA), and 533–553 (LVMF…WSIG).

The protein belongs to the AAE transporter (TC 2.A.81) family. YidE subfamily.

Its subcellular location is the cell membrane. The sequence is that of Putative transport protein YidE from Escherichia coli O6:H1 (strain CFT073 / ATCC 700928 / UPEC).